A 418-amino-acid chain; its full sequence is uncharacterized protein (418 aa).

Disordered regions lie at residues lysine 123–lysine 174, phenylalanine 209–glutamate 231, lysine 258–leucine 302, and lysine 344–lysine 418. Over residues asparagine 136–isoleucine 154 the composition is skewed to basic and acidic residues. A compositionally biased stretch (acidic residues) spans aspartate 156–serine 170. The segment covering phenylalanine 209 to glutamate 227 has biased composition (basic and acidic residues). Over residues asparagine 266–asparagine 293 the composition is skewed to low complexity. Residues lysine 344–asparagine 356 are compositionally biased toward acidic residues. Positions aspartate 359–valine 374 are enriched in polar residues. Over residues lysine 375–arginine 390 the composition is skewed to low complexity. The span at lysine 391–serine 401 shows a compositional bias: basic residues.

This is an uncharacterized protein from Dictyostelium discoideum (Social amoeba).